The sequence spans 1807 residues: Triacetic acid lactone synthase cle1 (1807 aa).

Residues 107–280 form the Starter acyltransferase (SAT) domain; that stretch reads LAPLTVIIHI…ANVPVNGRYH (174 aa). Positions 385-795 constitute a Ketosynthase family 3 (KS3) domain; that stretch reads DTSIAIIGAA…GNNTAIIICQ (411 aa). Catalysis depends on for beta-ketoacyl synthase activity residues Cys540, His675, and His718. One can recognise a Malonyl-CoA:ACP transacylase (MAT) domain in the interval 919 to 1176; that stretch reads SKAVYDSSYH…LGPCIWLEAG (258 aa). Positions 1272-1398 are N-terminal hotdog fold; sequence PVIDGLISLE…GTVIVDDERT (127 aa). A PKS/mFAS DH domain is found at 1272–1573; the sequence is PVIDGLISLE…FIRTSTSALQ (302 aa). The active-site Proton acceptor; for dehydratase activity is the His1304. The segment at 1416–1573 is C-terminal hotdog fold; sequence TVFSAPRGVA…FIRTSTSALQ (158 aa). Asp1475 (proton donor; for dehydratase activity) is an active-site residue. The region spanning 1605–1679 is the Carrier 1 domain; that stretch reads ANVWSLTVNL…IICERITAQT (75 aa). Ser1639 is subject to O-(pantetheine 4'-phosphoryl)serine. The segment at 1690–1720 is disordered; it reads GNSTSNTTSSSSQCTPSSSFESDSDTQATEL. The span at 1692–1710 shows a compositional bias: low complexity; the sequence is STSNTTSSSSQCTPSSSFE. Positions 1721-1797 constitute a Carrier 2 domain; sequence SLSAPTMEKV…DLHALVMRRG (77 aa). O-(pantetheine 4'-phosphoryl)serine is present on Ser1757.

Pantetheine 4'-phosphate serves as cofactor.

Its pathway is secondary metabolite biosynthesis; terpenoid biosynthesis. In terms of biological role, non-reducing polyketide synthase; part of the cluster A that mediates the biosynthesis of chevalone E and its oxidized derivatives that possess a unique five-membered lactone ring and can synergistically enhance the cytotoxicity of doxorubicin (DOX) in breast cancer cells. Within the pathway, cle1 takes part to the biosynthesis of the molecular scaffold via the synthesis the alpha-pyrone triacetic acid lactone (TAL) from one molecule of acetyl-CoA and two molecules of malonyl-CoA. The molecular scaffold is commonly biosynthesized by a series of enzymes including the non-reducing polyketide synthase (NR-PKS) cle1 that produces the alpha-pyrone triacetic acid lactone (TAL); The membrane-bound prenyltransferase cle5 that accepts TAL as its substrate to perform a C-3 geranylgeranylation reaction, in which the pathway-dedicated GGPS cle6 is required to provide GGPP, the other substrate of cle5; the FAD-dependent monooxygenase Cle3 that forms an (S)-epoxide ring at the terminal olefin of the geranylgeranyl group; and the terpene cyclase Cle7 that catalyzes the cyclization of the prenyl group that yields the pentacyclic pathway intermediate chevalone E. Chevalone E can derivatize into seven new oxidized analogs by the cytochrome P450 monooxygenases cle2 (acting at C-20) and cle4 (acting at C-11 and C-12). This chain is Triacetic acid lactone synthase cle1, found in Aspergillus versicolor.